The primary structure comprises 310 residues: Probable deoxyhypusine synthase (310 aa).

The active-site Nucleophile is Lys280.

It belongs to the deoxyhypusine synthase family. It depends on NAD(+) as a cofactor.

The enzyme catalyses [eIF5A protein]-L-lysine + spermidine = [eIF5A protein]-deoxyhypusine + propane-1,3-diamine. Its pathway is protein modification; eIF5A hypusination. Catalyzes the NAD-dependent oxidative cleavage of spermidine and the subsequent transfer of the butylamine moiety of spermidine to the epsilon-amino group of a specific lysine residue of the eIF-5A precursor protein to form the intermediate deoxyhypusine residue. This chain is Probable deoxyhypusine synthase (dys), found in Aeropyrum pernix (strain ATCC 700893 / DSM 11879 / JCM 9820 / NBRC 100138 / K1).